The primary structure comprises 322 residues: Acetyl-coenzyme A carboxylase carboxyl transferase subunit alpha (322 aa).

A CoA carboxyltransferase C-terminal domain is found at 30 to 293; that stretch reads ALDISAEITR…RQALQESLRK (264 aa).

This sequence belongs to the AccA family. As to quaternary structure, acetyl-CoA carboxylase is a heterohexamer composed of biotin carboxyl carrier protein (AccB), biotin carboxylase (AccC) and two subunits each of ACCase subunit alpha (AccA) and ACCase subunit beta (AccD).

It localises to the cytoplasm. The catalysed reaction is N(6)-carboxybiotinyl-L-lysyl-[protein] + acetyl-CoA = N(6)-biotinyl-L-lysyl-[protein] + malonyl-CoA. Its pathway is lipid metabolism; malonyl-CoA biosynthesis; malonyl-CoA from acetyl-CoA: step 1/1. Component of the acetyl coenzyme A carboxylase (ACC) complex. First, biotin carboxylase catalyzes the carboxylation of biotin on its carrier protein (BCCP) and then the CO(2) group is transferred by the carboxyltransferase to acetyl-CoA to form malonyl-CoA. The polypeptide is Acetyl-coenzyme A carboxylase carboxyl transferase subunit alpha (Nitrosomonas eutropha (strain DSM 101675 / C91 / Nm57)).